Consider the following 400-residue polypeptide: Enoyl-[acyl-carrier-protein] reductase [NADH] 1 (400 aa).

NAD(+) is bound by residues 48 to 53 (GASSGY), 74 to 75 (FE), 111 to 112 (DA), and 139 to 140 (LA). Y225 lines the substrate pocket. Y235 serves as the catalytic Proton donor. NAD(+) contacts are provided by residues K244 and 273 to 275 (VVT).

It belongs to the TER reductase family. Monomer.

The catalysed reaction is a 2,3-saturated acyl-[ACP] + NAD(+) = a (2E)-enoyl-[ACP] + NADH + H(+). The protein operates within lipid metabolism; fatty acid biosynthesis. Its function is as follows. Involved in the final reduction of the elongation cycle of fatty acid synthesis (FAS II). Catalyzes the reduction of a carbon-carbon double bond in an enoyl moiety that is covalently linked to an acyl carrier protein (ACP). This chain is Enoyl-[acyl-carrier-protein] reductase [NADH] 1, found in Vibrio parahaemolyticus serotype O3:K6 (strain RIMD 2210633).